The primary structure comprises 40 residues: Photosystem II reaction center protein J (40 aa).

The chain crosses the membrane as a helical span at residues 8 to 28; it reads IPLWLIGTVTGIPVIGLVGIF.

This sequence belongs to the PsbJ family. In terms of assembly, PSII is composed of 1 copy each of membrane proteins PsbA, PsbB, PsbC, PsbD, PsbE, PsbF, PsbH, PsbI, PsbJ, PsbK, PsbL, PsbM, PsbT, PsbX, PsbY, PsbZ, Psb30/Ycf12, at least 3 peripheral proteins of the oxygen-evolving complex and a large number of cofactors. It forms dimeric complexes.

The protein resides in the plastid. The protein localises to the chloroplast thylakoid membrane. In terms of biological role, one of the components of the core complex of photosystem II (PSII). PSII is a light-driven water:plastoquinone oxidoreductase that uses light energy to abstract electrons from H(2)O, generating O(2) and a proton gradient subsequently used for ATP formation. It consists of a core antenna complex that captures photons, and an electron transfer chain that converts photonic excitation into a charge separation. The protein is Photosystem II reaction center protein J of Cucumis sativus (Cucumber).